The primary structure comprises 1049 residues: Self-sufficient cytochrome P450 monooxygenase CYP505E4 (1049 aa).

Cys405 lines the heme pocket. Residues 461–470 (SATALSQHNM) show a composition bias toward polar residues. Positions 461 to 491 (SATALSQHNMSAGATASPGSSTHLAGDENGQ) are disordered. The segment covering 471-482 (SAGATASPGSST) has biased composition (low complexity). The Flavodoxin-like domain occupies 499–640 (ISFFYGSNSG…DLEVWEETNL (142 aa)). FMN-binding positions include 505–509 (SNSGT) and 584–616 (VFGC…TRLT). An FAD-binding FR-type domain is found at 678–906 (RDLVEGKVTA…RPAKDAFHLP (229 aa)).

This sequence in the N-terminal section; belongs to the cytochrome P450 family. Requires FAD as cofactor. FMN is required as a cofactor. Heme serves as cofactor.

The catalysed reaction is 2 oxidized [cytochrome P450] + NADPH = 2 reduced [cytochrome P450] + NADP(+) + H(+). It carries out the reaction an organic molecule + reduced [NADPH--hemoprotein reductase] + O2 = an alcohol + oxidized [NADPH--hemoprotein reductase] + H2O + H(+). It catalyses the reaction dodecanoate + reduced [NADPH--hemoprotein reductase] + O2 = 5-hydroxydodecanoate + oxidized [NADPH--hemoprotein reductase] + H2O + H(+). The enzyme catalyses dodecan-1-ol + reduced [NADPH--hemoprotein reductase] + O2 = 1,5-dodecanediol + oxidized [NADPH--hemoprotein reductase] + H2O + H(+). The catalysed reaction is dodecanoate + reduced [NADPH--hemoprotein reductase] + O2 = 9-hydroxydodecanoate + oxidized [NADPH--hemoprotein reductase] + H2O + H(+). It carries out the reaction dodecan-1-ol + reduced [NADPH--hemoprotein reductase] + O2 = 1,4-dodecanediol + oxidized [NADPH--hemoprotein reductase] + H2O + H(+). It catalyses the reaction dodecan-1-ol + reduced [NADPH--hemoprotein reductase] + O2 = 1,6-dodecanediol + oxidized [NADPH--hemoprotein reductase] + H2O + H(+). Self-sufficient cytochrome P450 monooxygenase that catalyzes the regioselective in-chain hydroxylation of alkanes, fatty alcohols, and fatty acids at the omega-7 position. Performs hydroxylation of C10-C16 n-alkanes and C12 and C14 fatty alcohols; and thereby enables the one step biocatalytic synthesis of rare alcohols such as 5-dodecanol and 7-tetradecanol. Converts 1-dodecanol into 1,5-dodecanediol as major product with very little sub-terminally hydroxylated products with the 1,4-dodecanediol and 1,6-dodecanediol more abundant. Converts dodecanoic acid to 5-hydroxydodecanoic acid which can be further converted into delta-dodecalactone by lactonization of the 5-hydroxy acid at low pH. Also gives sub-terminal hydroxylation of dodecanoic acid with 9-hydroxydodecanoic acid being the second most abundant product. Does not show any significant activity toward tetradecanoic acid. In Penicillium camemberti (strain FM 013), this protein is Self-sufficient cytochrome P450 monooxygenase CYP505E4.